Here is a 375-residue protein sequence, read N- to C-terminus: MKFELDTTDGRARRGRLVFERGVVETPAFMPVGTYGTVKGMTPEEVEATGAQIILGNTFHLWLRPGQEIMKLHGDLHDFMQWKGPILTDSGGFQVFSLGDIRKITEQGVHFRNPINGDPIFLDPEKSMEIQYDLGSDIVMIFDECTPYPADWDYAKRSMEMSLRWAKRSRDRFDSLGNKNALFGIIQGSVYEDLRDISVKGLVEIGFDGYAVGGLAVGEPKEDMHRILEHVCPQIPADKPRYLMGVGKPEDLVEGVRRGIDMFDCVMPTRNARNGHLFVTDGVVKIRNAKHKSDTAPLDAECDCYTCRNYSRAYLHHLDRCNEILGARLNTIHNLRYYQRLMAGLRKAIEEGKLESFVTDFYQRQGRTVPPLNVD.

Aspartate 89 (proton acceptor) is an active-site residue. Residues 89-93 (DSGGF), aspartate 143, glutamine 187, and glycine 214 each bind substrate. The interval 245-251 (GVGKPED) is RNA binding. Aspartate 264 functions as the Nucleophile in the catalytic mechanism. Residues 269–273 (TRNAR) are RNA binding; important for wobble base 34 recognition. 4 residues coordinate Zn(2+): cysteine 302, cysteine 304, cysteine 307, and histidine 333.

This sequence belongs to the queuine tRNA-ribosyltransferase family. In terms of assembly, homodimer. Within each dimer, one monomer is responsible for RNA recognition and catalysis, while the other monomer binds to the replacement base PreQ1. It depends on Zn(2+) as a cofactor.

The catalysed reaction is 7-aminomethyl-7-carbaguanine + guanosine(34) in tRNA = 7-aminomethyl-7-carbaguanosine(34) in tRNA + guanine. The protein operates within tRNA modification; tRNA-queuosine biosynthesis. Catalyzes the base-exchange of a guanine (G) residue with the queuine precursor 7-aminomethyl-7-deazaguanine (PreQ1) at position 34 (anticodon wobble position) in tRNAs with GU(N) anticodons (tRNA-Asp, -Asn, -His and -Tyr). Catalysis occurs through a double-displacement mechanism. The nucleophile active site attacks the C1' of nucleotide 34 to detach the guanine base from the RNA, forming a covalent enzyme-RNA intermediate. The proton acceptor active site deprotonates the incoming PreQ1, allowing a nucleophilic attack on the C1' of the ribose to form the product. After dissociation, two additional enzymatic reactions on the tRNA convert PreQ1 to queuine (Q), resulting in the hypermodified nucleoside queuosine (7-(((4,5-cis-dihydroxy-2-cyclopenten-1-yl)amino)methyl)-7-deazaguanosine). This chain is Queuine tRNA-ribosyltransferase, found in Klebsiella pneumoniae subsp. pneumoniae (strain ATCC 700721 / MGH 78578).